The following is a 55-amino-acid chain: Mannose/glucose-specific lectin alpha chain (55 aa).

The protein belongs to the leguminous lectin family. In terms of assembly, tetramer of two alpha and two beta chains.

The protein is Mannose/glucose-specific lectin alpha chain of Lathyrus sativus (White vetchling).